The chain runs to 1773 residues: Zinc finger CCCH domain-containing protein 19 (1773 aa).

The interval 145 to 166 is disordered; the sequence is SGDRLEENKEVSMEEEPSSHEL. Over residues 147–156 the composition is skewed to basic and acidic residues; that stretch reads DRLEENKEVS. Residues 196–218 are a coiled coil; the sequence is GEEIESDLESKKEKVDVIEEETT. Disordered stretches follow at residues 270–290, 361–409, and 434–591; these read IGEG…DVTE, DVDK…AGQT, and ISEM…KTVK. 2 stretches are compositionally biased toward basic and acidic residues: residues 273 to 286 and 361 to 378; these read GAKD…KEGV and DVDK…HVPE. Residues 403 to 437 adopt a coiled-coil conformation; sequence AEEAGQTVDLEEIREENQELSKELAQVDETKISEM. 2 stretches are compositionally biased toward basic and acidic residues: residues 444–455 and 497–513; these read MIKDEDQEKDDN and KVDR…TDTR. 2 stretches are compositionally biased toward acidic residues: residues 514-529 and 551-572; these read IEDE…TDVA and EEMT…EVEE. Residues 578–588 show a composition bias toward basic residues; that stretch reads GGKRKRGRNTK. Positions 581–588 match the Nuclear localization signal 1 motif; it reads RKRGRNTK. The segment at 599 to 665 adopts a PHD-type zinc-finger fold; that stretch reads EDVCFMCFDG…TYLCYTCMFS (67 aa). The span at 741 to 751 shows a compositional bias: basic and acidic residues; it reads AKRPLKGHETN. Positions 741–797 are disordered; it reads AKRPLKGHETNASKQGTASETDYVTDGGSDSDSSPKKRKTRSRSKSGSAEKILSSGD. The segment covering 752-762 has biased composition (polar residues); the sequence is ASKQGTASETD. One can recognise an SWIB/MDM2 domain in the interval 801–884; sequence SDETMEWASK…LNLLDSHFLK (84 aa). Positions 903–919 are enriched in basic and acidic residues; the sequence is PNHVDVDENLDHPVKSG. Positions 903–935 are disordered; sequence PNHVDVDENLDHPVKSGKDKKRKTRKKNVRKGR. The span at 920–935 shows a compositional bias: basic residues; it reads KDKKRKTRKKNVRKGR. A Nuclear localization signal 2 motif is present at residues 921-928; sequence DKKRKTRK. The Plus3 domain occupies 944-1076; sequence AVDMHNINLI…KAIALQEVRV (133 aa). The segment covering 1139 to 1152 has biased composition (basic and acidic residues); that stretch reads EEIPEIHADPKMDP. Positions 1139-1274 are disordered; the sequence is EEIPEIHADP…PETPARSSRA (136 aa). Acidic residues predominate over residues 1153-1163; it reads DCESEDEDEKE. A compositionally biased stretch (polar residues) spans 1193 to 1212; sequence FSSNESWTGTSNYSNTSANR. Ser1281 bears the Phosphoserine mark. Residues 1307-1361 enclose the GYF domain; it reads EKIWHYKDPSGKVQGPFSMAQLRKWNNTGYFPAKLEIWKANESPLDSVLLTDALA. 4 stretches are compositionally biased toward polar residues: residues 1409-1433, 1441-1469, 1499-1509, and 1518-1528; these read RNSQ…TTPT, SRWS…QSQT, VSVNHSATLHS, and SWGSMQTDHGG. Disordered stretches follow at residues 1409–1469, 1485–1605, and 1649–1746; these read RNSQ…QSQT, QPQT…SWGQ, and GQTQ…QQNN. Residues 1529–1555 show a composition bias toward low complexity; sequence SNTPSSQNNSTSYGTPSPSVLPSQSQP. Positions 1569 to 1579 are enriched in polar residues; it reads SQPNAQAQAQW. 2 stretches are compositionally biased toward low complexity: residues 1585-1602 and 1666-1677; these read NNNQ…QNSS and QSQSQSQVQAQA. Polar residues predominate over residues 1678–1708; the sequence is GTTGSGWMQPGQGIQSGNSNQNWGTQNQTAI. Low complexity predominate over residues 1722–1735; sequence GNQQQSQNGDSGYG. Positions 1737-1746 are enriched in polar residues; it reads NRQSGGQQNN. A C3H1-type zinc finger spans residues 1747–1773; it reads FKGQRVCKFFRENGHCRKGASCNYLHN.

In terms of assembly, interacts with unmethylated histone H3 and AGO2. The interaction with AGO2 in required to direct DNA methylation and silencing. In terms of tissue distribution, expressed in seedlings, mostly in the vasculature and shoot apices of young seedlings.

Its subcellular location is the nucleus. In terms of biological role, plays a central role in integrating RNA silencing and chromatin signals in 21 nt siRNA-dependent DNA methylation on cytosine pathway leading to transcriptional gene silencing of specific sequences. Involved in a chromatin-based RNA silencing pathway that encompasses both post-transcriptional gene silencing (PTGS) (e.g. RDR1, RDR6 and AGO2) and transcriptional gene silencing (TGS) (e.g. siRNA-dependent DNA methylation and histone H3) components. Mediates siRNA accumulation at specific chromatin loci. Binds H3K4me0 through its PHD to enforce low levels of H3K4 methylation and gene silencing at a subset of genomic loci. This Arabidopsis thaliana (Mouse-ear cress) protein is Zinc finger CCCH domain-containing protein 19 (NERD).